The following is an 878-amino-acid chain: Vacuolar membrane protease (878 aa).

At 1–16 (MASLRLPRANPLAFTR) the chain is on the cytoplasmic side. A helical membrane pass occupies residues 17–37 (WPVTVITAIVYLALLIPLLVV). Residues 38-390 (HHVVPSAPSS…STFVLFQLHT (353 aa)) are Vacuolar-facing. N-linked (GlcNAc...) asparagine glycosylation is found at Asn-53 and Asn-119. Zn(2+)-binding residues include His-174 and Asp-186. The Proton acceptor role is filled by Glu-220. Residues Glu-221, Glu-246, and His-319 each contribute to the Zn(2+) site. Residues 391-411 (LFALLVTLLIVGPLTLLFTSI) form a helical membrane-spanning segment. Residues 412-442 (ALTKADKMYLFRSSAKSEDRLDVVPLQGLRG) lie on the Cytoplasmic side of the membrane. The helical transmembrane segment at 443 to 463 (FFRFPFLFGIPTVVTVGLAYL) threads the bilayer. Over 464–473 (VTKVNPYIIH) the chain is Vacuolar. A helical membrane pass occupies residues 474–494 (SSAYAVWSMMVAAWVFLAWFV). Residues 495–508 (SRVADFARPSAFHR) are Cytoplasmic-facing. A helical transmembrane segment spans residues 509-529 (IYTLTWMYVLSWVSAVIATVY). The Vacuolar segment spans residues 530–533 (ANQR). The helical transmembrane segment at 534 to 554 (GLAGGYFIFFFHAGIFLATWI) threads the bilayer. The Cytoplasmic portion of the chain corresponds to 555–659 (SYLELFALPS…ALPKWTWGLQ (105 aa)). Over residues 577-590 (GRASGHGSRRGTTS) the composition is skewed to low complexity. Positions 577-611 (GRASGHGSRRGTTSGEDDGEEAEEEPTESTSLLGS) are disordered. Residues 591–603 (GEDDGEEAEEEPT) are compositionally biased toward acidic residues. Residues 660 to 680 (LLLTAPITLIMVGPLALLTIS) traverse the membrane as a helical segment. Over 681–693 (AISQTGQDGGHPL) the chain is Vacuolar. The helical transmembrane segment at 694-714 (FAYVAIAIFTTIMLTPLLPFI) threads the bilayer. At 715–721 (HRYTYHV) the chain is on the cytoplasmic side. The chain crosses the membrane as a helical span at residues 722-742 (PLFLLAVFLGTLIYNLVAFPF). At 743–878 (SDSNRLKLYY…RRAFEIGNDD (136 aa)) the chain is on the vacuolar side.

The protein belongs to the peptidase M28 family. Requires Zn(2+) as cofactor.

Its subcellular location is the vacuole membrane. Its function is as follows. May be involved in vacuolar sorting and osmoregulation. The polypeptide is Vacuolar membrane protease (Aspergillus flavus (strain ATCC 200026 / FGSC A1120 / IAM 13836 / NRRL 3357 / JCM 12722 / SRRC 167)).